The sequence spans 163 residues: Shikimate kinase (163 aa).

Gly-10–Thr-15 provides a ligand contact to ATP. Thr-14 contributes to the Mg(2+) binding site. Substrate-binding residues include Asp-28, Arg-52, and Gly-75. An ATP-binding site is contributed by Arg-116. Arg-134 is a substrate binding site. ATP is bound at residue Arg-151.

The protein belongs to the shikimate kinase family. Monomer. Mg(2+) serves as cofactor.

It localises to the cytoplasm. The catalysed reaction is shikimate + ATP = 3-phosphoshikimate + ADP + H(+). It functions in the pathway metabolic intermediate biosynthesis; chorismate biosynthesis; chorismate from D-erythrose 4-phosphate and phosphoenolpyruvate: step 5/7. In terms of biological role, catalyzes the specific phosphorylation of the 3-hydroxyl group of shikimic acid using ATP as a cosubstrate. The polypeptide is Shikimate kinase (Streptococcus pyogenes serotype M12 (strain MGAS2096)).